The sequence spans 166 residues: Minor capsid protein VP2 (166 aa).

Residues 138-166 (PAPSGFVNPNYQPSPPRLKLGPRPPSTNV) are disordered. Positions 149–166 (QPSPPRLKLGPRPPSTNV) are enriched in pro residues.

It belongs to the vesivirus VP2 protein family. As to quaternary structure, homooligomer. The portal-like structure consists in 12 copies of VP2. Interacts with capsid protein VP1.

It is found in the virion. It localises to the host cytoplasm. Minor structural protein that forms a portal-like structure at a unique three-fold axis of symmetry, following binding to the host receptor. The channel formed by VP2 may allow the delivery of the viral genome through the host endosomal membrane. The chain is Minor capsid protein VP2 from Homo sapiens (Human).